A 274-amino-acid polypeptide reads, in one-letter code: 4-diphosphocytidyl-2-C-methyl-D-erythritol kinase (274 aa).

Lys8 is a catalytic residue. Residue 94–104 (PSGAGLGGGSA) coordinates ATP. Asp136 is a catalytic residue.

Belongs to the GHMP kinase family. IspE subfamily.

The catalysed reaction is 4-CDP-2-C-methyl-D-erythritol + ATP = 4-CDP-2-C-methyl-D-erythritol 2-phosphate + ADP + H(+). The protein operates within isoprenoid biosynthesis; isopentenyl diphosphate biosynthesis via DXP pathway; isopentenyl diphosphate from 1-deoxy-D-xylulose 5-phosphate: step 3/6. In terms of biological role, catalyzes the phosphorylation of the position 2 hydroxy group of 4-diphosphocytidyl-2C-methyl-D-erythritol. The protein is 4-diphosphocytidyl-2-C-methyl-D-erythritol kinase of Bacteroides fragilis (strain ATCC 25285 / DSM 2151 / CCUG 4856 / JCM 11019 / LMG 10263 / NCTC 9343 / Onslow / VPI 2553 / EN-2).